A 323-amino-acid polypeptide reads, in one-letter code: Calcium homeostasis modulator protein 2 (323 aa).

Over 1–21 the chain is Cytoplasmic; it reads MAALIAENFRFLSLFFKSKDV. Residues 14-39 are central pore; the sequence is LFFKSKDVMIFNGLVALGTVGSQELF. Residues 22–43 traverse the membrane as a helical segment; the sequence is MIFNGLVALGTVGSQELFSVVA. Residues 44–52 are Extracellular-facing; it reads FHCPCSPAR. Cystine bridges form between Cys-46–Cys-130 and Cys-48–Cys-162. The chain crosses the membrane as a helical span at residues 53-76; it reads NYLYGLTAIGVPALALFLIGVILN. At 77–101 the chain is on the cytoplasmic side; that stretch reads NHTWNLVAECQYRRAKNCSAAPNFL. The helical transmembrane segment at 102–132 threads the bilayer; that stretch reads LLSSILGRAAVAPVTWSVISLLRGEAYVCAL. Over 133 to 179 the chain is Extracellular; that stretch reads SEFVDPSSLTAGDKGFPPAHATEVLARFPCGEGPANLSSFREEVSRR. A hemichannel docking region spans residues 145-152; that stretch reads DKGFPPAH. The chain crosses the membrane as a helical span at residues 180–206; that stretch reads LKYESQLFGWLLIGVVAILVFLTKCLK. Over 207–323 the chain is Cytoplasmic; it reads HYCSPLSYRQ…DNVEMALLTA (117 aa). Positions 214–251 are intersubunit interaction; that stretch reads YRQEAYWAQYRTNEDQLFQRTAEVHSRVLAANNVRRFF.

The protein belongs to the CALHM family. As to quaternary structure, homo-undecamer. Two undecameric hemichannels can assemble in a head-to-head manner to form a gap junction. Neuron, astrocyte, and microglia.

The protein resides in the cell membrane. The catalysed reaction is ATP(in) = ATP(out). Inhibited by divalent cations such as Co(2+) and Ni(2+). In terms of biological role, pore-forming subunit of Ca(2+) homeostasis modulator channels. Mediates ATP release from astrocytes and ATP-induced Ca(2+) influx in microglia thus regulating neuronal ATP and Ca(2+) homeostasis, synaptic transmission and neuroinflammatory response. May form intercellular gap junctions. The gating mechanism remains unknown. The polypeptide is Calcium homeostasis modulator protein 2 (Mus musculus (Mouse)).